Consider the following 177-residue polypeptide: RNA pyrophosphohydrolase (177 aa).

The Nudix hydrolase domain maps to 6 to 149 (GYRPNVGIVI…KRDVYRRVMK (144 aa)). Residues 38–59 (GGINPGESPEQAMYRELFEEVG) carry the Nudix box motif.

It belongs to the Nudix hydrolase family. RppH subfamily. Requires a divalent metal cation as cofactor.

Functionally, accelerates the degradation of transcripts by removing pyrophosphate from the 5'-end of triphosphorylated RNA, leading to a more labile monophosphorylated state that can stimulate subsequent ribonuclease cleavage. The protein is RNA pyrophosphohydrolase of Pectobacterium atrosepticum (strain SCRI 1043 / ATCC BAA-672) (Erwinia carotovora subsp. atroseptica).